We begin with the raw amino-acid sequence, 320 residues long: o-succinylbenzoate synthase (320 aa).

The active-site Proton donor is the Lys-133. Mg(2+) is bound by residues Asp-161, Glu-190, and Asp-213. Residue Lys-235 is the Proton acceptor of the active site.

Belongs to the mandelate racemase/muconate lactonizing enzyme family. MenC type 1 subfamily. The cofactor is a divalent metal cation.

It carries out the reaction (1R,6R)-6-hydroxy-2-succinyl-cyclohexa-2,4-diene-1-carboxylate = 2-succinylbenzoate + H2O. It functions in the pathway quinol/quinone metabolism; 1,4-dihydroxy-2-naphthoate biosynthesis; 1,4-dihydroxy-2-naphthoate from chorismate: step 4/7. It participates in quinol/quinone metabolism; menaquinone biosynthesis. Its function is as follows. Converts 2-succinyl-6-hydroxy-2,4-cyclohexadiene-1-carboxylate (SHCHC) to 2-succinylbenzoate (OSB). This Shigella boydii serotype 4 (strain Sb227) protein is o-succinylbenzoate synthase.